The following is a 448-amino-acid chain: tRNA(Ile)-lysidine synthase (448 aa).

ATP is bound at residue 27 to 32 (SGGVDS).

Belongs to the tRNA(Ile)-lysidine synthase family.

It is found in the cytoplasm. The enzyme catalyses cytidine(34) in tRNA(Ile2) + L-lysine + ATP = lysidine(34) in tRNA(Ile2) + AMP + diphosphate + H(+). Ligates lysine onto the cytidine present at position 34 of the AUA codon-specific tRNA(Ile) that contains the anticodon CAU, in an ATP-dependent manner. Cytidine is converted to lysidine, thus changing the amino acid specificity of the tRNA from methionine to isoleucine. The polypeptide is tRNA(Ile)-lysidine synthase (Vibrio campbellii (strain ATCC BAA-1116)).